Consider the following 284-residue polypeptide: Ribose-phosphate pyrophosphokinase 1 (284 aa).

ATP is bound at residue 34–36 (DGE). Mg(2+) is bound by residues H126 and D163. Residue K186 is part of the active site. Residues R188, D211, and 215-219 (STGGT) each bind D-ribose 5-phosphate.

It belongs to the ribose-phosphate pyrophosphokinase family. Class III (archaeal) subfamily. The cofactor is Mg(2+).

Its subcellular location is the cytoplasm. It catalyses the reaction D-ribose 5-phosphate + ATP = 5-phospho-alpha-D-ribose 1-diphosphate + AMP + H(+). The protein operates within metabolic intermediate biosynthesis; 5-phospho-alpha-D-ribose 1-diphosphate biosynthesis; 5-phospho-alpha-D-ribose 1-diphosphate from D-ribose 5-phosphate (route I): step 1/1. In terms of biological role, involved in the biosynthesis of the central metabolite phospho-alpha-D-ribosyl-1-pyrophosphate (PRPP) via the transfer of pyrophosphoryl group from ATP to 1-hydroxyl of ribose-5-phosphate (Rib-5-P). This is Ribose-phosphate pyrophosphokinase 1 from Archaeoglobus fulgidus (strain ATCC 49558 / DSM 4304 / JCM 9628 / NBRC 100126 / VC-16).